The primary structure comprises 414 residues: Na(+)-translocating NADH-quinone reductase subunit B (414 aa).

A run of 4 helical transmembrane segments spans residues W23–V40, I56–G76, F129–M149, and I164–T184. T236 bears the FMN phosphoryl threonine mark. A run of 5 helical transmembrane segments spans residues I268–V288, I297–S317, M325–T345, W358–Y378, and G381–I401.

It belongs to the NqrB/RnfD family. Composed of six subunits; NqrA, NqrB, NqrC, NqrD, NqrE and NqrF. It depends on FMN as a cofactor.

Its subcellular location is the cell inner membrane. It carries out the reaction a ubiquinone + n Na(+)(in) + NADH + H(+) = a ubiquinol + n Na(+)(out) + NAD(+). NQR complex catalyzes the reduction of ubiquinone-1 to ubiquinol by two successive reactions, coupled with the transport of Na(+) ions from the cytoplasm to the periplasm. NqrA to NqrE are probably involved in the second step, the conversion of ubisemiquinone to ubiquinol. The sequence is that of Na(+)-translocating NADH-quinone reductase subunit B from Vibrio parahaemolyticus serotype O3:K6 (strain RIMD 2210633).